The primary structure comprises 275 residues: MSDTQAAEPLAEPAAEPTGLNRWALRIEYDGTGYLGWQKQNDGTSIQGLIEAAASKLVRNRPVPSITAGRTDAGVHAAGMVIHLDFPDDAPIDARQIRDGMGYHLKPHRVVVLETAKVGPEWNARFSATWRSYRYTILNRPARPGLMENRVWHIKRPLDVDLMQQAANHLLGPHDFTSFRAVACQARSPIRTLDVLNIHRDGELVMIDTKARSFLHHQVRNMAGTLMMIGSRQWPVEKIIEILEAKDRCAAGQTAPPEGLCLMDVGYPDDPFNRS.

Asp-72 functions as the Nucleophile in the catalytic mechanism. Residue Tyr-133 participates in substrate binding.

Belongs to the tRNA pseudouridine synthase TruA family. Homodimer.

The catalysed reaction is uridine(38/39/40) in tRNA = pseudouridine(38/39/40) in tRNA. Formation of pseudouridine at positions 38, 39 and 40 in the anticodon stem and loop of transfer RNAs. The protein is tRNA pseudouridine synthase A of Gluconobacter oxydans (strain 621H) (Gluconobacter suboxydans).